The following is a 349-amino-acid chain: Phosphoribosylformylglycinamidine cyclo-ligase (349 aa).

Belongs to the AIR synthase family.

It is found in the cytoplasm. The enzyme catalyses 2-formamido-N(1)-(5-O-phospho-beta-D-ribosyl)acetamidine + ATP = 5-amino-1-(5-phospho-beta-D-ribosyl)imidazole + ADP + phosphate + H(+). The protein operates within purine metabolism; IMP biosynthesis via de novo pathway; 5-amino-1-(5-phospho-D-ribosyl)imidazole from N(2)-formyl-N(1)-(5-phospho-D-ribosyl)glycinamide: step 2/2. The polypeptide is Phosphoribosylformylglycinamidine cyclo-ligase (Methanococcus maripaludis (strain C6 / ATCC BAA-1332)).